The following is a 104-amino-acid chain: Large ribosomal subunit protein uL24 (104 aa).

This sequence belongs to the universal ribosomal protein uL24 family. Part of the 50S ribosomal subunit.

One of two assembly initiator proteins, it binds directly to the 5'-end of the 23S rRNA, where it nucleates assembly of the 50S subunit. In terms of biological role, one of the proteins that surrounds the polypeptide exit tunnel on the outside of the subunit. The polypeptide is Large ribosomal subunit protein uL24 (Pectobacterium atrosepticum (strain SCRI 1043 / ATCC BAA-672) (Erwinia carotovora subsp. atroseptica)).